The chain runs to 396 residues: 1-deoxy-D-xylulose 5-phosphate reductoisomerase (396 aa).

Residues threonine 13, glycine 14, serine 15, isoleucine 16, and asparagine 127 each coordinate NADPH. Lysine 128 serves as a coordination point for 1-deoxy-D-xylulose 5-phosphate. NADPH is bound at residue glutamate 129. Aspartate 153 is a Mn(2+) binding site. The 1-deoxy-D-xylulose 5-phosphate site is built by serine 154, glutamate 155, serine 184, and histidine 207. Glutamate 155 lines the Mn(2+) pocket. NADPH is bound at residue glycine 213. Serine 220, asparagine 225, lysine 226, and glutamate 229 together coordinate 1-deoxy-D-xylulose 5-phosphate. Glutamate 229 provides a ligand contact to Mn(2+).

It belongs to the DXR family. Mg(2+) serves as cofactor. Requires Mn(2+) as cofactor.

It catalyses the reaction 2-C-methyl-D-erythritol 4-phosphate + NADP(+) = 1-deoxy-D-xylulose 5-phosphate + NADPH + H(+). It functions in the pathway isoprenoid biosynthesis; isopentenyl diphosphate biosynthesis via DXP pathway; isopentenyl diphosphate from 1-deoxy-D-xylulose 5-phosphate: step 1/6. Its function is as follows. Catalyzes the NADPH-dependent rearrangement and reduction of 1-deoxy-D-xylulose-5-phosphate (DXP) to 2-C-methyl-D-erythritol 4-phosphate (MEP). The protein is 1-deoxy-D-xylulose 5-phosphate reductoisomerase of Pseudomonas fluorescens (strain Pf0-1).